A 307-amino-acid chain; its full sequence is Dihydroorotate dehydrogenase A (fumarate) (307 aa).

Residues serine 21 and 46-47 each bind FMN; that span reads KT. Substrate contacts are provided by residues lysine 46, 70–74, and asparagine 130; that span reads NSVGL. Asparagine 130 contacts FMN. The active-site Nucleophile is cysteine 133. FMN is bound by residues lysine 168 and isoleucine 194. 195–196 contributes to the substrate binding site; the sequence is NT. Residues glycine 220, 246–247, and 268–269 contribute to the FMN site; these read GG and GS.

Belongs to the dihydroorotate dehydrogenase family. Type 1 subfamily. As to quaternary structure, homodimer. FMN serves as cofactor.

The protein resides in the cytoplasm. It carries out the reaction (S)-dihydroorotate + fumarate = orotate + succinate. It participates in pyrimidine metabolism; UMP biosynthesis via de novo pathway. Its function is as follows. Catalyzes the conversion of dihydroorotate to orotate with fumarate as the electron acceptor. This chain is Dihydroorotate dehydrogenase A (fumarate) (pyrD), found in Lactobacillus delbrueckii subsp. bulgaricus (strain ATCC BAA-365 / Lb-18).